The sequence spans 298 residues: Beta-soluble NSF attachment protein (298 aa).

Belongs to the SNAP family. In terms of assembly, interacts with PRKCABP, and disrupts the interaction between GRIA2 and PRKCABP, leading to the internalization of GRIA2. As to expression, brain.

The protein resides in the membrane. Required for vesicular transport between the endoplasmic reticulum and the Golgi apparatus. The chain is Beta-soluble NSF attachment protein (NAPB) from Bos taurus (Bovine).